A 479-amino-acid chain; its full sequence is Aspartyl/glutamyl-tRNA(Asn/Gln) amidotransferase subunit B (479 aa).

It belongs to the GatB/GatE family. GatB subfamily. Heterotrimer of A, B and C subunits.

It carries out the reaction L-glutamyl-tRNA(Gln) + L-glutamine + ATP + H2O = L-glutaminyl-tRNA(Gln) + L-glutamate + ADP + phosphate + H(+). It catalyses the reaction L-aspartyl-tRNA(Asn) + L-glutamine + ATP + H2O = L-asparaginyl-tRNA(Asn) + L-glutamate + ADP + phosphate + 2 H(+). Functionally, allows the formation of correctly charged Asn-tRNA(Asn) or Gln-tRNA(Gln) through the transamidation of misacylated Asp-tRNA(Asn) or Glu-tRNA(Gln) in organisms which lack either or both of asparaginyl-tRNA or glutaminyl-tRNA synthetases. The reaction takes place in the presence of glutamine and ATP through an activated phospho-Asp-tRNA(Asn) or phospho-Glu-tRNA(Gln). In Halorhodospira halophila (strain DSM 244 / SL1) (Ectothiorhodospira halophila (strain DSM 244 / SL1)), this protein is Aspartyl/glutamyl-tRNA(Asn/Gln) amidotransferase subunit B.